Here is a 311-residue protein sequence, read N- to C-terminus: Olfactory receptor 5L1 (311 aa).

At 1–25 (MGKENCTTVAEFILLGLSDVPELRV) the chain is on the extracellular side. An N-linked (GlcNAc...) asparagine glycan is attached at asparagine 5. Residues 26–46 (CLFLLFLLIYGVTLLANLGMI) traverse the membrane as a helical segment. The Cytoplasmic portion of the chain corresponds to 47-54 (ALIQVSSR). The helical transmembrane segment at 55–75 (LHTPMYFFLSHLSSVDFCYSS) threads the bilayer. Residues 76-99 (IIVPKMLANIFNKDKAISFLGCMV) lie on the Extracellular side of the membrane. Cysteine 97 and cysteine 189 form a disulfide bridge. Residues 100 to 120 (QFYLFCTCVVTEVFLLAVMAY) traverse the membrane as a helical segment. Topologically, residues 121–139 (DRFVAICNPLLYTVTMSWK) are cytoplasmic. A helical membrane pass occupies residues 140–160 (VRVELASCCYFCGTVCSLIHL). Topologically, residues 161–196 (CLALRIPFYRSNVINHFFCDLPPVLSLACSDITVNE) are extracellular. N-linked (GlcNAc...) asparagine glycosylation is present at asparagine 195. Residues 197 to 217 (TLLFLVATLNESVTIMIILTS) traverse the membrane as a helical segment. The Cytoplasmic segment spans residues 218–237 (YLLILTTILKMGSAEGRHKA). Residues 238–258 (FSTCASHLTAITVFHGTVLSI) traverse the membrane as a helical segment. The Extracellular segment spans residues 259 to 271 (YCRPSSGNSGDAD). The helical transmembrane segment at 272–292 (KVATVFYTVVIPMLNSVIYSL) threads the bilayer. Topologically, residues 293 to 311 (RNKDVKEALRKVMGSKIHS) are cytoplasmic.

This sequence belongs to the G-protein coupled receptor 1 family.

Its subcellular location is the cell membrane. Its function is as follows. Odorant receptor. The protein is Olfactory receptor 5L1 (OR5L1) of Homo sapiens (Human).